A 431-amino-acid chain; its full sequence is Serine--tRNA ligase (431 aa).

Residue 238-240 (TSE) participates in L-serine binding. 269–271 (RSE) provides a ligand contact to ATP. Position 292 (glutamate 292) interacts with L-serine. 356 to 359 (EISS) contacts ATP. Position 391 (serine 391) interacts with L-serine.

This sequence belongs to the class-II aminoacyl-tRNA synthetase family. Type-1 seryl-tRNA synthetase subfamily. In terms of assembly, homodimer. The tRNA molecule binds across the dimer.

It is found in the cytoplasm. The enzyme catalyses tRNA(Ser) + L-serine + ATP = L-seryl-tRNA(Ser) + AMP + diphosphate + H(+). It carries out the reaction tRNA(Sec) + L-serine + ATP = L-seryl-tRNA(Sec) + AMP + diphosphate + H(+). It participates in aminoacyl-tRNA biosynthesis; selenocysteinyl-tRNA(Sec) biosynthesis; L-seryl-tRNA(Sec) from L-serine and tRNA(Sec): step 1/1. Functionally, catalyzes the attachment of serine to tRNA(Ser). Is also able to aminoacylate tRNA(Sec) with serine, to form the misacylated tRNA L-seryl-tRNA(Sec), which will be further converted into selenocysteinyl-tRNA(Sec). This Leptothrix cholodnii (strain ATCC 51168 / LMG 8142 / SP-6) (Leptothrix discophora (strain SP-6)) protein is Serine--tRNA ligase.